We begin with the raw amino-acid sequence, 217 residues long: Proteasome subunit beta type-9 (217 aa).

Residues 1–18 (MLDESLEPGWLSEEVKTG) constitute a propeptide, removed in mature form. T19 (nucleophile) is an active-site residue.

The protein belongs to the peptidase T1B family. In terms of assembly, the 26S proteasome consists of a 20S proteasome core and two 19S regulatory subunits. The 20S proteasome core is composed of 28 subunits that are arranged in four stacked rings, resulting in a barrel-shaped structure. The two end rings are each formed by seven alpha subunits, and the two central rings are each formed by seven beta subunits. The catalytic chamber with the active sites is on the inside of the barrel. Component of the immunoproteasome, where it displaces the equivalent housekeeping subunit PSMB6. In terms of processing, autocleaved. The resulting N-terminal Thr residue of the mature subunit is responsible for the nucleophile proteolytic activity.

It is found in the cytoplasm. It localises to the nucleus. It catalyses the reaction Cleavage of peptide bonds with very broad specificity.. Functionally, the proteasome is a multicatalytic proteinase complex which is characterized by its ability to cleave peptides with Arg, Phe, Tyr, Leu, and Glu adjacent to the leaving group at neutral or slightly basic pH. The proteasome has an ATP-dependent proteolytic activity. This subunit is involved in antigen processing to generate class I binding peptides. The sequence is that of Proteasome subunit beta type-9 (psmb9) from Oncorhynchus mykiss (Rainbow trout).